The primary structure comprises 968 residues: MPFTLGQRWISDTESELGLGTVVALDTRMITLLFPATGENRLYARNDSPITRVMFNPGDTISNHEGWELQVEEVKEENGLLTYIGTRLDTQESGVAMREVLLDSKLTFSKPQDRLFAGQIDRMDRFALRFRARKYQSEQYRLPFAGLRGMRASLIPHQLHIAYEVGQRHAPRVLLADEVGLGKTIEAGMIIHQQLLAGRAERVLIVVPETLQHQWLVEMMRRFNLYFSLFDDSRYSEAKLDSSNPFETEQLVICSLDFVRRNKLRLEELADAQWDLLVVDEAHHLAWSEEAPSREYQVIEQLAEHIPGVLLLTATPEQLGQQSHFARLRLLDPNRFHDYQDFVAEQQKYRPVADAVTLLLSGERLADDKLNLLGELIDEQDIEPLLKAANSDSDNSEQARQELVTMLMDRHGTSRVLFRNTRNGVKGFPHRFLHQIKLPLPTQYQTAIKVSGIMGAKKTVEARARDMLYPEQIYQEFEGENATWWNFDPRVEWLLNYLVANRHEKVLVICAHAATALQLEQVLREREAIRAAVFHEGLSIIERDRAAAYFASEEDGAQVLLCSEIGSEGRNFQFASHLVMFDLPFNPDLLEQRIGRLDRIGQMHDIQIMVPYLENTAQAVLGRWFHEGLDAFEHTCPTGRTIYDSGYEQLIGFLAAPTEQEGLDEFIHHCRQQHDHLKVQLEQGRDRLLEMHSNGGEKAQALAEAIANQDNDVNLVGFALNLFDIVGINQDDRSDNLIVLTPSDHMLVPDFPGLPQDGCTVTFDREQALSREDAQFVSWEHPIIRNGLDLILSGDTGSCAVSLLKNKALPVGTLLVELVYVVEAQAPKHLQLTRFLPPTPIRMLMDRKGTNLAAQVEFESFNRQLNAVNRHTSSKLVNAVQQDVHAMLQQAESLVEEQARALIEQAKQEADDKLSTELARLEALKAVNPNIRDDEVEALEFNRKQVLVNLNEAGWRLDAIRLVVVTHQ.

The Helicase ATP-binding domain maps to 164-334; sequence EVGQRHAPRV…FARLRLLDPN (171 aa). 177–184 contributes to the ATP binding site; the sequence is DEVGLGKT. A DEAH box motif is present at residues 280–283; it reads DEAH. The 175-residue stretch at 490–664 folds into the Helicase C-terminal domain; the sequence is RVEWLLNYLV…AAPTEQEGLD (175 aa).

Belongs to the SNF2/RAD54 helicase family. RapA subfamily. In terms of assembly, interacts with the RNAP. Has a higher affinity for the core RNAP than for the holoenzyme. Its ATPase activity is stimulated by binding to RNAP.

Transcription regulator that activates transcription by stimulating RNA polymerase (RNAP) recycling in case of stress conditions such as supercoiled DNA or high salt concentrations. Probably acts by releasing the RNAP, when it is trapped or immobilized on tightly supercoiled DNA. Does not activate transcription on linear DNA. Probably not involved in DNA repair. The chain is RNA polymerase-associated protein RapA from Serratia proteamaculans (strain 568).